A 542-amino-acid polypeptide reads, in one-letter code: Phosphoenolpyruvate carboxykinase (ATP) (542 aa).

Substrate-binding residues include Arg67, Tyr208, and Lys214. ATP contacts are provided by residues Lys214, His233, and 249–257; that span reads GLSGTGKTT. Mn(2+) contacts are provided by Lys214 and His233. Residue Asp270 coordinates Mn(2+). Residues Glu298, Arg334, 450-451, and Thr456 each bind ATP; that span reads RI. Residue Arg334 participates in substrate binding.

It belongs to the phosphoenolpyruvate carboxykinase (ATP) family. As to quaternary structure, monomer. The cofactor is Mn(2+).

It is found in the cytoplasm. The catalysed reaction is oxaloacetate + ATP = phosphoenolpyruvate + ADP + CO2. It participates in carbohydrate biosynthesis; gluconeogenesis. Functionally, involved in the gluconeogenesis. Catalyzes the conversion of oxaloacetate (OAA) to phosphoenolpyruvate (PEP) through direct phosphoryl transfer between the nucleoside triphosphate and OAA. The chain is Phosphoenolpyruvate carboxykinase (ATP) from Vibrio vulnificus (strain YJ016).